We begin with the raw amino-acid sequence, 329 residues long: Cytosolic arginine sensor for mTORC1 subunit 1 (329 aa).

Residue Ser14 is modified to Phosphoserine. ACT domains are found at residues Ala72–Ala138 and Gly260–Gln321. Residues Ser111–Val112, Gly274, Ile280–Val281, and Thr300–Asp304 contribute to the L-arginine site.

It belongs to the GATS family. As to quaternary structure, forms homodimers and heterodimers with CASTOR2. Interacts with the GATOR2 complex which is composed of MIOS, SEC13, SEH1L, WDR24 and WDR59; the interaction is negatively regulated by arginine. Interacts with TM4SF5; the interaction is positively regulated by leucine and is negatively regulated by arginine. Phosphorylation at Ser-14 by AKT1, promoting the interaction between CASTOR1 and RNF167. Post-translationally, ubiquitinated by RNF167 via 'Lys-29'-polyubiquitination, leading to its degradation, releasing the GATOR2 complex. Ubiquitination by RNF167 is promoted by phosphorylation at Ser-14 by AKT1.

It is found in the cytoplasm. The protein localises to the cytosol. Functionally, functions as an intracellular arginine sensor within the amino acid-sensing branch of the TORC1 signaling pathway. As a homodimer or a heterodimer with CASTOR2, binds and inhibits the GATOR subcomplex GATOR2 and thereby mTORC1. Binding of arginine to CASTOR1 allosterically disrupts the interaction of CASTOR1-containing dimers with GATOR2 which can in turn activate mTORC1 and the TORC1 signaling pathway. This is Cytosolic arginine sensor for mTORC1 subunit 1 from Bos taurus (Bovine).